The sequence spans 573 residues: Urease subunit alpha 2 (573 aa).

The region spanning 135 to 573 (GGMDTHVHYI…ISLNQLYFFS (439 aa)) is the Urease domain. Positions 140, 142, and 223 each coordinate Ni(2+). An N6-carboxylysine modification is found at K223. H225 provides a ligand contact to substrate. H252 and H278 together coordinate Ni(2+). H326 functions as the Proton donor in the catalytic mechanism. D366 is a Ni(2+) binding site.

The protein belongs to the metallo-dependent hydrolases superfamily. Urease alpha subunit family. Heterotrimer of UreA (gamma), UreB (beta) and UreC (alpha) subunits. Three heterotrimers associate to form the active enzyme. It depends on Ni cation as a cofactor. In terms of processing, carboxylation allows a single lysine to coordinate two nickel ions.

It localises to the cytoplasm. The catalysed reaction is urea + 2 H2O + H(+) = hydrogencarbonate + 2 NH4(+). The protein operates within nitrogen metabolism; urea degradation; CO(2) and NH(3) from urea (urease route): step 1/1. This is Urease subunit alpha 2 from Brucella melitensis biotype 1 (strain ATCC 23456 / CCUG 17765 / NCTC 10094 / 16M).